A 352-amino-acid polypeptide reads, in one-letter code: Glycerol-1-phosphate dehydrogenase [NAD(P)+] (352 aa).

NAD(+) is bound by residues 99–103 (GTKID) and 121–124 (TSPS). Substrate is bound at residue D126. S130 is an NAD(+) binding site. Position 173 (D173) interacts with substrate. The Zn(2+) site is built by D173 and H253. H257 provides a ligand contact to substrate. Residue H269 participates in Zn(2+) binding.

Belongs to the glycerol-1-phosphate dehydrogenase family. Zn(2+) is required as a cofactor.

Its subcellular location is the cytoplasm. The enzyme catalyses sn-glycerol 1-phosphate + NAD(+) = dihydroxyacetone phosphate + NADH + H(+). It catalyses the reaction sn-glycerol 1-phosphate + NADP(+) = dihydroxyacetone phosphate + NADPH + H(+). It functions in the pathway membrane lipid metabolism; glycerophospholipid metabolism. Functionally, catalyzes the NAD(P)H-dependent reduction of dihydroxyacetonephosphate (DHAP or glycerone phosphate) to glycerol 1-phosphate (G1P). The G1P thus generated is used as the glycerophosphate backbone of phospholipids in the cellular membranes of Archaea. This chain is Glycerol-1-phosphate dehydrogenase [NAD(P)+], found in Thermoplasma volcanium (strain ATCC 51530 / DSM 4299 / JCM 9571 / NBRC 15438 / GSS1).